Reading from the N-terminus, the 715-residue chain is Photosystem I P700 chlorophyll a apoprotein A1 (715 aa).

Transmembrane regions (helical) follow at residues 60 to 83 (VFSAHFGQLAIIFIWLSGMYFHGA), 146 to 169 (LYSTAIGGLIFAALMLFAGWFHYH), 185 to 209 (LNHHLAGLLGLGSLSWAGHQVHVSL), 281 to 299 (TVHHHLAIAVLFLIAGHMY), 336 to 359 (WHAQLALNLAMLGSLTIIVAHHMY), 375 to 401 (LSLFTHHMWIGGFLVVGAAAHAAIFMV), 423 to 445 (AIISHLNWACIFLGFHSFGLYIH), and 521 to 539 (FLVHHIHAFTIHVTVLILL). Residues cysteine 563 and cysteine 572 each coordinate [4Fe-4S] cluster. The next 2 membrane-spanning stretches (helical) occupy residues 579 to 600 (HVFLGLFWMYNAISVVIFHFSW) and 654 to 676 (LSAYGLLFLGAHFVWAFSLMFLF). Histidine 665 serves as a coordination point for chlorophyll a'. Positions 673 and 681 each coordinate chlorophyll a. A phylloquinone-binding site is contributed by tryptophan 682. Residues 714–715 (AE) traverse the membrane as a helical segment.

Belongs to the PsaA/PsaB family. As to quaternary structure, the PsaA/B heterodimer binds the P700 chlorophyll special pair and subsequent electron acceptors. PSI consists of a core antenna complex that captures photons, and an electron transfer chain that converts photonic excitation into a charge separation. The eukaryotic PSI reaction center is composed of at least 11 subunits. It depends on P700 is a chlorophyll a/chlorophyll a' dimer, A0 is one or more chlorophyll a, A1 is one or both phylloquinones and FX is a shared 4Fe-4S iron-sulfur center. as a cofactor.

It is found in the plastid. The protein localises to the chloroplast thylakoid membrane. It carries out the reaction reduced [plastocyanin] + hnu + oxidized [2Fe-2S]-[ferredoxin] = oxidized [plastocyanin] + reduced [2Fe-2S]-[ferredoxin]. PsaA and PsaB bind P700, the primary electron donor of photosystem I (PSI), as well as the electron acceptors A0, A1 and FX. PSI is a plastocyanin-ferredoxin oxidoreductase, converting photonic excitation into a charge separation, which transfers an electron from the donor P700 chlorophyll pair to the spectroscopically characterized acceptors A0, A1, FX, FA and FB in turn. Oxidized P700 is reduced on the lumenal side of the thylakoid membrane by plastocyanin. The chain is Photosystem I P700 chlorophyll a apoprotein A1 from Phlegmariurus squarrosus (Rock tassel fern).